The chain runs to 199 residues: Tropomyosin-1 (199 aa).

Residues 1–199 (MDKIREKLSN…DEIAASLENL (199 aa)) adopt a coiled-coil conformation. Glycyl lysine isopeptide (Lys-Gly) (interchain with G-Cter in ubiquitin) cross-links involve residues Lys-39 and Lys-59. Disordered regions lie at residues 59-81 (KLEA…ENQI) and 102-147 (LAES…TEKL). 2 stretches are compositionally biased toward basic and acidic residues: residues 68–80 (KQTE…KENQ) and 102–114 (LAES…DSHH). The span at 115 to 126 (LQSNNDNFSKKN) shows a compositional bias: polar residues. Positions 136–147 (SDTKLKETTEKL) are enriched in basic and acidic residues. Lys-187 participates in a covalent cross-link: Glycyl lysine isopeptide (Lys-Gly) (interchain with G-Cter in ubiquitin). Ser-195 bears the Phosphoserine mark.

In terms of assembly, homodimer.

The protein localises to the cytoplasm. Its subcellular location is the cytoskeleton. This Saccharomyces cerevisiae (strain ATCC 204508 / S288c) (Baker's yeast) protein is Tropomyosin-1 (TPM1).